Here is a 189-residue protein sequence, read N- to C-terminus: Segregation and condensation protein B (189 aa).

This sequence belongs to the ScpB family. In terms of assembly, homodimer. Homodimerization may be required to stabilize the binding of ScpA to the Smc head domains. Component of a cohesin-like complex composed of ScpA, ScpB and the Smc homodimer, in which ScpA and ScpB bind to the head domain of Smc. The presence of the three proteins is required for the association of the complex with DNA.

It is found in the cytoplasm. Participates in chromosomal partition during cell division. May act via the formation of a condensin-like complex containing Smc and ScpA that pull DNA away from mid-cell into both cell halves. This Lachnoclostridium phytofermentans (strain ATCC 700394 / DSM 18823 / ISDg) (Clostridium phytofermentans) protein is Segregation and condensation protein B.